The chain runs to 176 residues: CASP-like protein 5A1 (176 aa).

The Cytoplasmic portion of the chain corresponds to M1–T35. A helical transmembrane segment spans residues L36 to M56. The Extracellular portion of the chain corresponds to L57–A67. The chain crosses the membrane as a helical span at residues F68–I88. The Cytoplasmic portion of the chain corresponds to D89–S102. A helical membrane pass occupies residues L103–A123. The Extracellular segment spans residues C124–T152. The chain crosses the membrane as a helical span at residues A153–L173. Residues A174–R176 are Cytoplasmic-facing.

It belongs to the Casparian strip membrane proteins (CASP) family. Homodimer and heterodimers.

It localises to the cell membrane. This Ginkgo biloba (Ginkgo) protein is CASP-like protein 5A1.